The following is a 691-amino-acid chain: L-type lectin-domain containing receptor kinase S.6 (691 aa).

Positions 1–25 (MNHHHYSLVIFHLILFLSLDFPTLS) are cleaved as a signal peptide. Over 26–311 (HRFSPPLQNL…VVGLKIPVWS (286 aa)) the chain is Extracellular. Residues 27-257 (RFSPPLQNLT…LHIVERWKFR (231 aa)) form a legume-lectin like region. N-linked (GlcNAc...) asparagine glycosylation is found at Asn-34 and Asn-89. Residues 312-332 (LLPGLAAIVILVAFIVFSLIC) traverse the membrane as a helical segment. The Cytoplasmic segment spans residues 333–691 (GKKRISEEAD…PWMTPKSHFS (359 aa)). The Protein kinase domain maps to 366 to 653 (FNENAIVGQG…IRGEAPLPVL (288 aa)). ATP contacts are provided by residues 372–380 (VGQGASATV) and Lys-394. Asp-500 functions as the Proton acceptor in the catalytic mechanism.

The protein in the C-terminal section; belongs to the protein kinase superfamily. Ser/Thr protein kinase family. It in the N-terminal section; belongs to the leguminous lectin family.

The protein resides in the cell membrane. It catalyses the reaction L-seryl-[protein] + ATP = O-phospho-L-seryl-[protein] + ADP + H(+). The enzyme catalyses L-threonyl-[protein] + ATP = O-phospho-L-threonyl-[protein] + ADP + H(+). Its function is as follows. Involved in resistance response to the pathogenic oomycetes Phytophthora infestans and Phytophthora capsici and to the pathogenic bacteria Pseudomonas syringae. The polypeptide is L-type lectin-domain containing receptor kinase S.6 (Arabidopsis thaliana (Mouse-ear cress)).